Here is a 161-residue protein sequence, read N- to C-terminus: Type IV major fimbrial protein FimA (161 aa).

Positions 1–7 (MKSLQKG) are cleaved as a propeptide — leader sequence. Residue Phe8 is modified to N-methylphenylalanine. The chain crosses the membrane as a helical span at residues 8 to 28 (FTLIELMIVVAIIGILAAFAI). A disulfide bridge links Cys63 with Cys106.

The protein belongs to the N-Me-Phe pilin family. In terms of assembly, the pili are polar flexible filaments of about 5.4 nanometers diameter and 2.5 micrometers average length; they consist of only a single polypeptide chain arranged in a helical configuration of five subunits per turn in the assembled pilus.

The protein localises to the fimbrium. It localises to the membrane. In terms of biological role, major component of the type IV fimbriae that plays an essential role in twitching motility, natural transformation, and protease secretion. The chain is Type IV major fimbrial protein FimA (fimA) from Dichelobacter nodosus (Bacteroides nodosus).